A 349-amino-acid chain; its full sequence is Cytoplasmic tRNA 2-thiolation protein 2 (349 aa).

Belongs to the CTU2/NCS2 family.

The protein resides in the cytoplasm. It functions in the pathway tRNA modification; 5-methoxycarbonylmethyl-2-thiouridine-tRNA biosynthesis. In terms of biological role, plays a central role in 2-thiolation of mcm(5)S(2)U at tRNA wobble positions of tRNA(Lys), tRNA(Glu) and tRNA(Gln). May act by forming a heterodimer with tut-1/ctu-1 that ligates sulfur from thiocarboxylated urm-1 onto the uridine of tRNAs at wobble position. This chain is Cytoplasmic tRNA 2-thiolation protein 2, found in Caenorhabditis briggsae.